Here is a 186-residue protein sequence, read N- to C-terminus: MGNQLGTLKKEEVELLQNSSHFDSRELRALYKQFRKDSPSGTINKQEFKEIMTQMGVGDQFLQDLLFNVFDKNKDSTINFQEFVCGLSSITRGTPEEKIEFAFSLYDIDGNGYITRSEMESILESMYKLVGTFVTCSGKKFDPHDLIEEFFDSMDDDGDGYISLEEYKRGTLKNPDIIQGLKLLNQ.

4 EF-hand domains span residues 40-58, 66-93, 94-129, and 142-177; these read SGTI…MGVG, LFNV…ITRG, TPEE…MYKL, and DPHD…NPDI. 10 residues coordinate Ca(2+): Asp-107, Asp-109, Asn-111, Tyr-113, Glu-118, Asp-155, Asp-157, Asp-159, Tyr-161, and Glu-166.

It belongs to the recoverin family.

May prevent cells from entering development prematurely in the presence of environmental nutrients. This Dictyostelium discoideum (Social amoeba) protein is Calcium-binding protein NCSA (ncsA).